Reading from the N-terminus, the 169-residue chain is Peptide deformylase (169 aa).

The Fe cation site is built by cysteine 94 and histidine 136. Residue glutamate 137 is part of the active site. A Fe cation-binding site is contributed by histidine 140.

This sequence belongs to the polypeptide deformylase family. The cofactor is Fe(2+).

It carries out the reaction N-terminal N-formyl-L-methionyl-[peptide] + H2O = N-terminal L-methionyl-[peptide] + formate. In terms of biological role, removes the formyl group from the N-terminal Met of newly synthesized proteins. Requires at least a dipeptide for an efficient rate of reaction. N-terminal L-methionine is a prerequisite for activity but the enzyme has broad specificity at other positions. In Phenylobacterium zucineum (strain HLK1), this protein is Peptide deformylase.